Reading from the N-terminus, the 367-residue chain is MAERVHRKNTRPVKVGNLTIGGNDEIIIQSMTTTKTHDVEATVAEINRLEEAGCQIVRVACPDMRAAEAISEIKKRINIPLVVDIHFNYKFALKAIEGGADKIRINPGNIGKRENVEAVVKAAKEKGIPIRIGVNAGSLERHLLEKYGYPTADAMVESALHHIRILEELDFYDIIVSMKASDVRLAIEAYDKASRAFDYPLHLGITESGTLFAGTVKSAAGIGALLHMGIGNTLRISLSADPVEEVKVARELLKSFGLAANAATLISCPTCGRIEIDLISIANEVEEYISKIKAPIKVAVLGCAVNGPGEAREADIGIAGARGEGLLFMKGEIVRKVPEETMVEELKKEIDKLAEEHYAKQREAQPN.

Positions 268, 271, 303, and 310 each coordinate [4Fe-4S] cluster.

The protein belongs to the IspG family. The cofactor is [4Fe-4S] cluster.

It carries out the reaction (2E)-4-hydroxy-3-methylbut-2-enyl diphosphate + oxidized [flavodoxin] + H2O + 2 H(+) = 2-C-methyl-D-erythritol 2,4-cyclic diphosphate + reduced [flavodoxin]. It participates in isoprenoid biosynthesis; isopentenyl diphosphate biosynthesis via DXP pathway; isopentenyl diphosphate from 1-deoxy-D-xylulose 5-phosphate: step 5/6. In terms of biological role, converts 2C-methyl-D-erythritol 2,4-cyclodiphosphate (ME-2,4cPP) into 1-hydroxy-2-methyl-2-(E)-butenyl 4-diphosphate. This is 4-hydroxy-3-methylbut-2-en-1-yl diphosphate synthase (flavodoxin) from Shouchella clausii (strain KSM-K16) (Alkalihalobacillus clausii).